Reading from the N-terminus, the 295-residue chain is Aspartate carbamoyltransferase catalytic subunit (295 aa).

Carbamoyl phosphate-binding residues include R49 and T50. K77 contributes to the L-aspartate binding site. Residues R99, H127, and Q130 each contribute to the carbamoyl phosphate site. The L-aspartate site is built by R161 and R212. Carbamoyl phosphate-binding residues include G251 and P252.

Belongs to the aspartate/ornithine carbamoyltransferase superfamily. ATCase family. In terms of assembly, heterododecamer (2C3:3R2) of six catalytic PyrB chains organized as two trimers (C3), and six regulatory PyrI chains organized as three dimers (R2).

The catalysed reaction is carbamoyl phosphate + L-aspartate = N-carbamoyl-L-aspartate + phosphate + H(+). Its pathway is pyrimidine metabolism; UMP biosynthesis via de novo pathway; (S)-dihydroorotate from bicarbonate: step 2/3. In terms of biological role, catalyzes the condensation of carbamoyl phosphate and aspartate to form carbamoyl aspartate and inorganic phosphate, the committed step in the de novo pyrimidine nucleotide biosynthesis pathway. The protein is Aspartate carbamoyltransferase catalytic subunit of Campylobacter jejuni subsp. jejuni serotype O:2 (strain ATCC 700819 / NCTC 11168).